The chain runs to 1088 residues: RNA-directed RNA polymerase (1088 aa).

The RdRp catalytic domain occupies 501-687; the sequence is LSYGDVTRFL…AKRYIAGGKI (187 aa).

It belongs to the reoviridae RNA-directed RNA polymerase family. As to quaternary structure, interacts with VP3 (Potential). Interacts with VP2; this interaction activates VP1. Interacts with NSP5; this interaction is probably necessary for the formation of functional virus factories. Interacts with NSP2; this interaction is weak. Mg(2+) is required as a cofactor.

It localises to the virion. The enzyme catalyses RNA(n) + a ribonucleoside 5'-triphosphate = RNA(n+1) + diphosphate. In terms of biological role, RNA-directed RNA polymerase that is involved in both transcription and genome replication. Together with VP3 capping enzyme, forms an enzyme complex positioned near the channels situated at each of the five-fold vertices of the core. Following infection, the outermost layer of the virus is lost, leaving a double-layered particle (DLP) made up of the core and VP6 shell. VP1 then catalyzes the transcription of fully conservative plus-strand genomic RNAs that are extruded through the DLP's channels into the cytoplasm where they function as mRNAs for translation of viral proteins. One copy of each of the viral (+)RNAs is also recruited during core assembly, together with newly synthesized polymerase complexes and VP2. The polymerase of these novo-formed particles catalyzes the synthesis of complementary minus-strands leading to dsRNA formation. To do so, the polymerase specifically recognizes and binds 4 bases 5'-UGUG-3' in the conserved 3'-sequence of plus-strand RNA templates. VP2 presumably activates the autoinhibited VP1-RNA complex to coordinate packaging and genome replication. Once dsRNA synthesis is complete, the polymerase switches to the transcriptional mode, thus providing secondary transcription. This is RNA-directed RNA polymerase from Bos taurus (Bovine).